A 161-amino-acid polypeptide reads, in one-letter code: Lipoprotein signal peptidase (161 aa).

Transmembrane regions (helical) follow at residues 6–26 (ILFLITAGLVLLLDQFTKFYV), 67–87 (GLFFTSVTLIAAGLILFYLIK), and 90–110 (VSDLMMVIPLALVLAGAMGNL). Catalysis depends on residues aspartate 121 and aspartate 139. The helical transmembrane segment at 134–154 (AFNIADTAISIGVLFLVVDMI) threads the bilayer.

This sequence belongs to the peptidase A8 family.

It is found in the cell inner membrane. It carries out the reaction Release of signal peptides from bacterial membrane prolipoproteins. Hydrolyzes -Xaa-Yaa-Zaa-|-(S,diacylglyceryl)Cys-, in which Xaa is hydrophobic (preferably Leu), and Yaa (Ala or Ser) and Zaa (Gly or Ala) have small, neutral side chains.. The protein operates within protein modification; lipoprotein biosynthesis (signal peptide cleavage). Functionally, this protein specifically catalyzes the removal of signal peptides from prolipoproteins. In Syntrophus aciditrophicus (strain SB), this protein is Lipoprotein signal peptidase.